The sequence spans 182 residues: Endoribonuclease YbeY (182 aa).

Zn(2+)-binding residues include H120, H124, and H130. Residues 157 to 182 are disordered; the sequence is RGVSFAPKPTGAGAFPSAADRDDTQN.

Belongs to the endoribonuclease YbeY family. Zn(2+) serves as cofactor.

Its subcellular location is the cytoplasm. Single strand-specific metallo-endoribonuclease involved in late-stage 70S ribosome quality control and in maturation of the 3' terminus of the 16S rRNA. The chain is Endoribonuclease YbeY from Corynebacterium jeikeium (strain K411).